Here is a 369-residue protein sequence, read N- to C-terminus: Tetraacyldisaccharide 4'-kinase (369 aa).

Residue 68–75 (VVGGTGKT) coordinates ATP.

This sequence belongs to the LpxK family.

The catalysed reaction is a lipid A disaccharide + ATP = a lipid IVA + ADP + H(+). It functions in the pathway glycolipid biosynthesis; lipid IV(A) biosynthesis; lipid IV(A) from (3R)-3-hydroxytetradecanoyl-[acyl-carrier-protein] and UDP-N-acetyl-alpha-D-glucosamine: step 6/6. Functionally, transfers the gamma-phosphate of ATP to the 4'-position of a tetraacyldisaccharide 1-phosphate intermediate (termed DS-1-P) to form tetraacyldisaccharide 1,4'-bis-phosphate (lipid IVA). The chain is Tetraacyldisaccharide 4'-kinase from Chlamydia trachomatis serovar D (strain ATCC VR-885 / DSM 19411 / UW-3/Cx).